Consider the following 128-residue polypeptide: Small ribosomal subunit protein eS8 (128 aa).

This sequence belongs to the eukaryotic ribosomal protein eS8 family. In terms of assembly, part of the 30S ribosomal subunit.

The sequence is that of Small ribosomal subunit protein eS8 from Metallosphaera sedula (strain ATCC 51363 / DSM 5348 / JCM 9185 / NBRC 15509 / TH2).